The chain runs to 374 residues: Chaperone protein DnaJ (374 aa).

Positions 5 to 70 (DFYEILGVGK…QKRDAYDRYG (66 aa)) constitute a J domain. Residues 29–50 (AMKHHPDRNPDSKGAEDKFKEA) are disordered. Positions 35-50 (DRNPDSKGAEDKFKEA) are enriched in basic and acidic residues. The CR-type zinc-finger motif lies at 134-212 (GYDTTIRVPS…CSGAGKIKRN (79 aa)). Residues C147, C150, C164, C167, C186, C189, C200, and C203 each contribute to the Zn(2+) site. 4 CXXCXGXG motif repeats span residues 147-154 (CETCDGSG), 164-171 (CTTCGGHG), 186-193 (CPKCHGSG), and 200-207 (CGTCSGAG).

Belongs to the DnaJ family. Homodimer. It depends on Zn(2+) as a cofactor.

The protein localises to the cytoplasm. In terms of biological role, participates actively in the response to hyperosmotic and heat shock by preventing the aggregation of stress-denatured proteins and by disaggregating proteins, also in an autonomous, DnaK-independent fashion. Unfolded proteins bind initially to DnaJ; upon interaction with the DnaJ-bound protein, DnaK hydrolyzes its bound ATP, resulting in the formation of a stable complex. GrpE releases ADP from DnaK; ATP binding to DnaK triggers the release of the substrate protein, thus completing the reaction cycle. Several rounds of ATP-dependent interactions between DnaJ, DnaK and GrpE are required for fully efficient folding. Also involved, together with DnaK and GrpE, in the DNA replication of plasmids through activation of initiation proteins. This chain is Chaperone protein DnaJ, found in Janthinobacterium sp. (strain Marseille) (Minibacterium massiliensis).